We begin with the raw amino-acid sequence, 242 residues long: Probable 2-phosphosulfolactate phosphatase (242 aa).

This sequence belongs to the ComB family. It depends on Mg(2+) as a cofactor.

The catalysed reaction is (2R)-O-phospho-3-sulfolactate + H2O = (2R)-3-sulfolactate + phosphate. The sequence is that of Probable 2-phosphosulfolactate phosphatase from Synechococcus sp. (strain JA-3-3Ab) (Cyanobacteria bacterium Yellowstone A-Prime).